The following is a 43-amino-acid chain: uncharacterized protein (43 aa).

This is an uncharacterized protein from Sinorhizobium fredii (strain NBRC 101917 / NGR234).